The sequence spans 670 residues: Zinc finger protein 233 (670 aa).

One can recognise a KRAB domain in the interval 8–79; it reads VTFKDVAVVF…ETEIQGDGCS (72 aa). A C2H2-type 1; degenerate zinc finger spans residues 258 to 280; sequence QTSDENGKGLSVGSNLELHQQLH. The C2H2-type 2; degenerate zinc finger occupies 311 to 336; the sequence is EKCYRNGDSGEGFSQGSHLQPHQRVS. Residues 342–364 form a C2H2-type 3; degenerate zinc finger; the sequence is YRCQVYARSSNQNSCLPSHELTH. The segment at 370-392 adopts a C2H2-type 4; degenerate zinc-finger fold; the sequence is CTCGRCGKGFHHSLDFDIHCVDS. The C2H2-type 5; degenerate zinc finger occupies 398-420; that stretch reads CKCDVYDKGFSQTSQLQAHQRGH. 7 C2H2-type zinc fingers span residues 452–474, 480–502, 508–530, 536–558, 564–586, 592–614, and 620–642; these read YKCEVCDKGFSKASNLQAHQRIH, YKCDVCDKNFSRNSHLQAHQRVH, YKCDTCGKDFSQISHLQAHQRVH, YKCETCGKGFSQSSHLQDHQQVH, YKCDVCGKGFSWSSHLQAHQRVH, YKCEECRKGFIWNSYLHVHQRIH, and YKCGMCGKSFSQTSHLQAHQRVH.

This sequence belongs to the krueppel C2H2-type zinc-finger protein family.

Its subcellular location is the nucleus. In terms of biological role, may be involved in transcriptional regulation. The chain is Zinc finger protein 233 (ZNF233) from Homo sapiens (Human).